The chain runs to 290 residues: MGDYMIRATGFNGHVRAFAARTTESVEDMRRRHDMWNTATAAAGRTLTITLMMGAMLKGNESLHVKVKGGGPIGQIMAEANAHGEGIAYVSNPHVHFELNDKGKLDVARAVGTDGFVYVTKDLGLKEPYQGSAPIVSGEIGEDFTYYFVMSEQTPSAVGVGVLVNPEDRSVLAAGGFILQLLPNTPEEVVAAIEERLGQLPQVSRMIGEGLTPEEILDRVLDEPKILSHTEIQFSCKCSADKVVQALISMGREEMEGLIEEQGEAEVHCHFCNERYHYDRSALEDILKDM.

Intrachain disulfides connect cysteine 236-cysteine 238 and cysteine 269-cysteine 272.

Belongs to the HSP33 family. Post-translationally, under oxidizing conditions two disulfide bonds are formed involving the reactive cysteines. Under reducing conditions zinc is bound to the reactive cysteines and the protein is inactive.

It is found in the cytoplasm. Its function is as follows. Redox regulated molecular chaperone. Protects both thermally unfolding and oxidatively damaged proteins from irreversible aggregation. Plays an important role in the bacterial defense system toward oxidative stress. The polypeptide is 33 kDa chaperonin (Brevibacillus brevis (strain 47 / JCM 6285 / NBRC 100599)).